The sequence spans 231 residues: Flagellar L-ring protein (231 aa).

Residues 1-18 (MNRLMIVSLLGIATVLGG) form the signal peptide. Cys19 is lipidated: N-palmitoyl cysteine. A lipid anchor (S-diacylglycerol cysteine) is attached at Cys19. The tract at residues 118-141 (LSLSAEYGGSRDAKGDSQAGQSNS) is disordered.

The protein belongs to the FlgH family. In terms of assembly, the basal body constitutes a major portion of the flagellar organelle and consists of four rings (L,P,S, and M) mounted on a central rod.

The protein localises to the cell outer membrane. The protein resides in the bacterial flagellum basal body. In terms of biological role, assembles around the rod to form the L-ring and probably protects the motor/basal body from shearing forces during rotation. This is Flagellar L-ring protein from Pseudomonas paraeruginosa (strain DSM 24068 / PA7) (Pseudomonas aeruginosa (strain PA7)).